The sequence spans 5641 residues: Cyclochlorotine synthetase (5641 aa).

Residues 95–124 (PENLNGHLIGSTNGHKKQWENDSADDKRGQ) form a disordered region. Residues 111–124 (KQWENDSADDKRGQ) are compositionally biased toward basic and acidic residues. Residues 217–622 (FTENVQRYPT…GRRDTQVKIR (406 aa)) are adenylation (A) domain 1. Residues 816–892 (TEEEYKIQTL…DLVSNCKMSA (77 aa)) form the Carrier 1 domain. A thiolation (T) domain 1 region spans residues 821-889 (KIQTLKEIWS…QLSDLVSNCK (69 aa)). Ser-853 is subject to O-(pantetheine 4'-phosphoryl)serine. The segment at 926 to 1333 (EDVYPCTPLQ…AHVAEQIGQP (408 aa)) is condensation (C) domain 1. Positions 1390 to 1768 (DGNLTFEELN…ISRATTQIKI (379 aa)) are adenylation (A) domain 2. One can recognise a Carrier 2 domain in the interval 1902 to 1978 (IELSEKQENM…QLVMIATELT (77 aa)). Residues 1907–1975 (KQENMARLWA…RFDQLVMIAT (69 aa)) are thiolation (T) domain 2. At Ser-1939 the chain carries O-(pantetheine 4'-phosphoryl)serine. Residues 2022-2438 (DIYACTPFQE…DLASEQDLAK (417 aa)) form a condensation (C) domain 2 region. The adenylation (A) domain 3 stretch occupies residues 2459–2859 (AEKARQHPNK…GRADTQVKLR (401 aa)). The Carrier 3 domain maps to 2976 to 3052 (GPLTEMETTL…GMAIKIQPIH (77 aa)). Residues 2977–3049 (PLTEMETTLA…NLAGMAIKIQ (73 aa)) form a thiolation (T) domain 3 region. Ser-3013 bears the O-(pantetheine 4'-phosphoryl)serine mark. A condensation (C) domain 3 region spans residues 3089 to 3482 (DIYPCTPLQV…LETVLSAFST (394 aa)). An adenylation (A) domain 4 region spans residues 3523 to 3873 (VQRAPDKVAI…IARKDLQVKL (351 aa)). The 77-residue stretch at 4005–4081 (IPSTPTEMKM…ELATKIAPRI (77 aa)) folds into the Carrier 4 domain. A thiolation (T) domain 4 region spans residues 4010–4078 (TEMKMQQLWA…RLSELATKIA (69 aa)). Ser-4042 carries the O-(pantetheine 4'-phosphoryl)serine modification. Residues 4123–4549 (KDVYPCTPLQ…QSLDSLSQQD (427 aa)) form a condensation (C) domain 4 region. The interval 4574-4982 (QEIAGRHPDA…GRIGTDIKLR (409 aa)) is adenylation (A) domain 5. Residues 5118–5194 (PPSTQEEKVI…SLAEKISWES (77 aa)) form the Carrier 5 domain. Positions 5123-5191 (EEKVIAALWA…KLASLAEKIS (69 aa)) are thiolation (T) domain 5. Position 5155 is an O-(pantetheine 4'-phosphoryl)serine (Ser-5155). The tract at residues 5260 to 5556 (AYLDIGPDVQ…DKCTTCVSGS (297 aa)) is condensation (C) domain 5.

The protein belongs to the NRP synthetase family.

Its pathway is mycotoxin biosynthesis. Functionally, nonribosomal peptide synthetase; part of the gene cluster that mediates the biosynthesis of the mycotoxin cyclochlorotine, a hepatotoxic and carcinogenic cyclic chlorinated pentapeptide. Within the pathway, The NRPS cctN initially catalyzes the condensation of L-serine (Ser), Pro, L-2-aminobutyrate (2Abu), Ser, and beta-Phe in this order. During the chain elongation, side-chain hydroxy group of Ser4 would be used as a nucleophile, giving isocyclotine as a product of terminal condensation-like (CT) domain-catalyzed cyclization. After the dichlorination of Pro2 catalyzed by cctP2 to produce isocyclochlorotine, the cctO-mediated transacylation of isocyclochlorotine can furnish cyclochlorotine. The subsequent hydroxylation of cyclochlorotine by cctR yields hydroxycyclochlorotine as the final product. CctP1 probably acts as a phenylalanine aminomutase and provides the uncommon building block beta-Phe. Furthermore, 2Abu can be synthesized from threonine by one of the threonine dehydratases and transaminases localized outside of the cluster. The functions of the remaining proteins encoded by the cluster, cctM and cctT, have not been identified yet. The sequence is that of Cyclochlorotine synthetase from Talaromyces islandicus (Penicillium islandicum).